Reading from the N-terminus, the 256-residue chain is uncharacterized protein (256 aa).

The 56-residue stretch at 7–62 (PAERQKTLLNLISKQSVISINNLVNILGVSHMTVRRDIQKLEEDGKVISVSGGVQL) folds into the HTH deoR-type domain. A DNA-binding region (H-T-H motif) is located at residues 24–43 (ISINNLVNILGVSHMTVRRD).

This is an uncharacterized protein from Haemophilus influenzae (strain ATCC 51907 / DSM 11121 / KW20 / Rd).